Here is a 42-residue protein sequence, read N- to C-terminus: Beta-2-microglobulin (42 aa).

The Ig-like C1-type domain maps to 5–42; it reads PKIQVYSRHPAZBGKPBFLBCYVSGFHPXZIZIBLLKB.

In terms of assembly, heterodimer of an alpha chain and a beta chain. Beta-2-microglobulin is the beta-chain of major histocompatibility complex class I molecules.

It localises to the secreted. Functionally, component of the class I major histocompatibility complex (MHC). Involved in the presentation of peptide antigens to the immune system. This Canis lupus familiaris (Dog) protein is Beta-2-microglobulin (B2M).